The following is a 921-amino-acid chain: Isoleucine--tRNA ligase (921 aa).

Residues P57–H67 carry the 'HIGH' region motif. E552 serves as a coordination point for L-isoleucyl-5'-AMP. The 'KMSKS' region signature appears at K593–S597. K596 is a binding site for ATP. Zn(2+)-binding residues include C888, C891, C908, and C911.

Belongs to the class-I aminoacyl-tRNA synthetase family. IleS type 1 subfamily. Monomer. Requires Zn(2+) as cofactor.

It localises to the cytoplasm. The catalysed reaction is tRNA(Ile) + L-isoleucine + ATP = L-isoleucyl-tRNA(Ile) + AMP + diphosphate. Functionally, catalyzes the attachment of isoleucine to tRNA(Ile). As IleRS can inadvertently accommodate and process structurally similar amino acids such as valine, to avoid such errors it has two additional distinct tRNA(Ile)-dependent editing activities. One activity is designated as 'pretransfer' editing and involves the hydrolysis of activated Val-AMP. The other activity is designated 'posttransfer' editing and involves deacylation of mischarged Val-tRNA(Ile). The polypeptide is Isoleucine--tRNA ligase (Bacillus cereus (strain 03BB102)).